A 139-amino-acid polypeptide reads, in one-letter code: Large ribosomal subunit protein uL16 (139 aa).

The interval 74–94 (LTKKPAETRQGSGKGSPESWV) is disordered.

Belongs to the universal ribosomal protein uL16 family. Part of the 50S ribosomal subunit.

Its function is as follows. Binds 23S rRNA and is also seen to make contacts with the A and possibly P site tRNAs. The sequence is that of Large ribosomal subunit protein uL16 from Saccharopolyspora erythraea (strain ATCC 11635 / DSM 40517 / JCM 4748 / NBRC 13426 / NCIMB 8594 / NRRL 2338).